Reading from the N-terminus, the 483-residue chain is MPTAQLLLLACLLWGLEARTAQLRKANDRSGRCQYIFSVASPNESSCPEQGQAMSAIQDLQRDLESTKARLSSLEGLLHQLTLGQAAGPSESQEGLHRELGTLRKEREQLETQARELEVAYSNLLRDKSALEEEKRRLGEENEDLAQRLEHSSQEVARLRRGQCPQAHSSSQDVPAGSREVSKWNVETVNFQELKSELTEVPASRILKESPSGHPRNEEGDSGCGELVWVGEPLTLRTAETITGKYGVWMRDPKPTYPHTRETTWRIDTVGTDIRQVFEYELASQFLQGYPSKVHVLPRPLESTGAVVYRGSLYFQGAGSGTVVRYELTAETVKAEREIPGAGYHGQFPYSWGGYTDIDLAVDETGLWVIYSTQEAKGAIVLSKLNPETLELEQTWETNIRKQSVANAFVICGHLYTISSYSSPDATVNFAYDTGTGRSRVLSIPFKNRYKYSSMIDYNPLEKKLFAWDNFNMVTYDIRLSKM.

A signal peptide spans 1-18; it reads MPTAQLLLLACLLWGLEA. Asn43 is a glycosylation site (N-linked (GlcNAc...) asparagine). The stretch at 51–162 forms a coiled coil; the sequence is GQAMSAIQDL…SQEVARLRRG (112 aa). The interval 153–179 is disordered; sequence SQEVARLRRGQCPQAHSSSQDVPAGSR. Residues 223-482 enclose the Olfactomedin-like domain; it reads GCGELVWVGE…MVTYDIRLSK (260 aa). An intrachain disulfide couples Cys224 to Cys412. Positions 359, 407, 408, 456, and 457 each coordinate Ca(2+). Residues 481–483 carry the Microbody targeting signal motif; the sequence is SKM.

As to quaternary structure, homodimer (via N-terminus). Can also form higher oligomers. Interacts with OLFM3, FN1, NRCAM, GLDN and NFASC. Interacts (via N-terminus) with MYL2. Interacts with SFRP1, FRZB, FZD7, FZD10, FZD1 and WIF1; regulates Wnt signaling. Interacts with SNTA1; regulates muscle hypertrophy. Interacts with ERBB2 and ERBB3; activates ERBB2-ERBB3 signaling pathway. Interacts with SNCG; affects its secretion and its aggregation. In terms of processing, N-glycosylated. Palmitoylated. Post-translationally, undergoes a calcium-dependent proteolytic cleavage at Arg-205 by CAPN2 in the endoplasmic reticulum. The result is the production of two fragments, one of 35 kDa containing the C-terminal olfactomedin-like domain, and another of 20 kDa containing the N-terminal leucine zipper-like domain. As to expression, expressed in optic nerve head, ciliary body and retina.

The protein localises to the secreted. The protein resides in the golgi apparatus. It localises to the cytoplasmic vesicle. It is found in the extracellular space. Its subcellular location is the extracellular matrix. The protein localises to the extracellular exosome. The protein resides in the mitochondrion. It localises to the mitochondrion intermembrane space. It is found in the mitochondrion inner membrane. Its subcellular location is the mitochondrion outer membrane. The protein localises to the rough endoplasmic reticulum. The protein resides in the cell projection. It localises to the cilium. It is found in the endoplasmic reticulum. Secreted glycoprotein regulating the activation of different signaling pathways in adjacent cells to control different processes including cell adhesion, cell-matrix adhesion, cytoskeleton organization and cell migration. Promotes substrate adhesion, spreading and formation of focal contacts. Negatively regulates cell-matrix adhesion and stress fiber assembly through Rho protein signal transduction. Modulates the organization of actin cytoskeleton by stimulating the formation of stress fibers through interactions with components of Wnt signaling pathways. Promotes cell migration through activation of PTK2 and the downstream phosphatidylinositol 3-kinase signaling. Plays a role in bone formation and promotes osteoblast differentiation in a dose-dependent manner through mitogen-activated protein kinase signaling. Mediates myelination in the peripheral nervous system through ERBB2/ERBB3 signaling. Plays a role as a regulator of muscle hypertrophy through the components of dystrophin-associated protein complex. Involved in positive regulation of mitochondrial depolarization. Plays a role in neurite outgrowth. May participate in the obstruction of fluid outflow in the trabecular meshwork. The protein is Myocilin (MYOC) of Canis lupus familiaris (Dog).